A 212-amino-acid chain; its full sequence is Pyridoxine/pyridoxamine 5'-phosphate oxidase (212 aa).

Substrate is bound by residues 8–11 (RREY) and Lys66. FMN contacts are provided by residues 61–66 (RIVLLK), 76–77 (FT), Arg82, Lys83, and Gln105. Substrate-binding residues include Tyr123, Arg127, and Ser131. Residues 140-141 (QS) and Trp185 contribute to the FMN site. 191 to 193 (RLH) lines the substrate pocket. Arg195 contributes to the FMN binding site.

It belongs to the pyridoxamine 5'-phosphate oxidase family. As to quaternary structure, homodimer. It depends on FMN as a cofactor.

The catalysed reaction is pyridoxamine 5'-phosphate + O2 + H2O = pyridoxal 5'-phosphate + H2O2 + NH4(+). It carries out the reaction pyridoxine 5'-phosphate + O2 = pyridoxal 5'-phosphate + H2O2. Its pathway is cofactor metabolism; pyridoxal 5'-phosphate salvage; pyridoxal 5'-phosphate from pyridoxamine 5'-phosphate: step 1/1. It functions in the pathway cofactor metabolism; pyridoxal 5'-phosphate salvage; pyridoxal 5'-phosphate from pyridoxine 5'-phosphate: step 1/1. Its function is as follows. Catalyzes the oxidation of either pyridoxine 5'-phosphate (PNP) or pyridoxamine 5'-phosphate (PMP) into pyridoxal 5'-phosphate (PLP). This chain is Pyridoxine/pyridoxamine 5'-phosphate oxidase, found in Shewanella frigidimarina (strain NCIMB 400).